Reading from the N-terminus, the 527-residue chain is Rhesus-like glycoprotein A (527 aa).

The Cytoplasmic segment spans residues 1–18 (MTHNDDDHKWVTTKRKEP). Residues 19 to 39 (IFFTVILFIFQIFMIICFAAL) traverse the membrane as a helical segment. Residues 40 to 70 (TGYDTNKNYTGSENPDEFKGGEVQERVNNFY) lie on the Extracellular side of the membrane. Residue asparagine 47 is glycosylated (N-linked (GlcNAc...) asparagine). Residues 71-91 (GYFRDINIMIFFGFGFLMTFL) traverse the membrane as a helical segment. Topologically, residues 92–99 (RRYGYSAL) are cytoplasmic. The chain crosses the membrane as a helical span at residues 100–120 (GYTFIISALVSQWSVLLNGFF). The Extracellular portion of the chain corresponds to 121-141 (EAWSHSNKHGEFPSTWEFSMD). A helical transmembrane segment spans residues 142-162 (SLLQGFFCSGSVMISYGAILG). Residues 163–166 (RVTP) lie on the Cytoplasmic side of the membrane. A helical transmembrane segment spans residues 167–187 (LHMLIMGIIEPIFFFLNVFIG). Residues 188–195 (EMNLEAID) are Extracellular-facing. A helical membrane pass occupies residues 196–216 (VGGGMYIHLFGSVFGLTVAWF). The Cytoplasmic segment spans residues 217 to 236 (LTDRKSKECTDNAPSYSGDN). A helical membrane pass occupies residues 237–257 (FAMAGTLFLWMMWPSFNAAIA). Over 258–263 (PLGEPQ) the chain is Extracellular. A helical transmembrane segment spans residues 264 to 284 (FRAIANTFLSLTGSTVATFIV). Topologically, residues 285–299 (SRLFSHLGNKLDMVH) are cytoplasmic. The helical transmembrane segment at 300-319 (VQNSSLAGGVVQGCIAHMNI) threads the bilayer. The Extracellular portion of the chain corresponds to 320-321 (NP). A helical transmembrane segment spans residues 322-342 (GGAIAMGFIAGTISVCGYLFI). Residues 343–357 (TPKVQRKLHIQDTCG) lie on the Cytoplasmic side of the membrane. The chain crosses the membrane as a helical span at residues 358-378 (ILNLHCIPGFLGSIAAIFAAI). Residues 379–406 (KGLNNPNMYSKVEFEQIFRAGDSQASAN) lie on the Extracellular side of the membrane. A helical transmembrane segment spans residues 407–427 (LIATMVSIGLGIVGGLLVGVI). At 428 to 527 (LLQLKKIKGL…EEDEFKQEPI (100 aa)) the chain is on the cytoplasmic side. The tract at residues 471–527 (SEDTAGGDDEEEGVGKEHGAVEMGKHNRIVQPKQDNKYHKQLPSDDEEEDEFKQEPI) is disordered. Residues 483-495 (GVGKEHGAVEMGK) show a composition bias toward basic and acidic residues. Over residues 514–527 (SDDEEEDEFKQEPI) the composition is skewed to acidic residues.

This sequence belongs to the ammonium transporter (TC 2.A.49) family. Rh subfamily. In terms of assembly, interacts with ap1g1.

Its subcellular location is the contractile vacuole. It localises to the membrane. Functionally, may be a carbon dioxide/bicarbonate transporter. The protein is Rhesus-like glycoprotein A (rhgA) of Dictyostelium discoideum (Social amoeba).